A 111-amino-acid polypeptide reads, in one-letter code: Disintegrin piscivostatin-alpha (111 aa).

Residues 1 to 20 (MIQVLLVTICLAVFPYQGSS) form the signal peptide. Positions 21–44 (IILESGNVNDYEVVYPRKITPLPK) are excised as a propeptide. A Disintegrin domain is found at 45–111 (GAVQPKNPCC…GDCPRKHFYA (67 aa)). Intrachain disulfides connect cysteine 53-cysteine 76, cysteine 67-cysteine 73, cysteine 72-cysteine 97, and cysteine 85-cysteine 104. Positions 89–91 (RGD) match the Cell attachment site motif. A propeptide spanning residues 110–111 (YA) is cleaved from the precursor.

The protein belongs to the disintegrin family. Dimeric disintegrin subfamily. As to quaternary structure, heterodimer with piscivostatin-beta; disulfide-linked. In terms of tissue distribution, expressed by the venom gland.

Its subcellular location is the secreted. Its function is as follows. Inhibits fibrinogen interaction with platelets. Acts by binding to alpha-IIb/beta-3 (ITGA2B/ITGB3) on the platelet surface and inhibits both ADP-induced platelet aggregation and platelet aggregate dissociation in human platelet-rich plasma. This chain is Disintegrin piscivostatin-alpha, found in Agkistrodon piscivorus piscivorus (Eastern cottonmouth).